We begin with the raw amino-acid sequence, 199 residues long: MSLVPMVVEQTSRGERSYDIFSRLLKERIIMLSGEVNDDSSNLIVSQLLFLESEDPDKDISIYINSPGGSITAGMAIYDTMQYIKPDVSTICVGMAASMGAFLLSSGANGKRYALPNAEIMIHQPLGGFQGQATDIQIHANRILKIKESLNKILSENTNQPLEVIEADVERDNFMTADEAKTYGLVDKVITKNETGKDK.

The active-site Nucleophile is serine 98. Residue histidine 123 is part of the active site.

Belongs to the peptidase S14 family. In terms of assembly, fourteen ClpP subunits assemble into 2 heptameric rings which stack back to back to give a disk-like structure with a central cavity, resembling the structure of eukaryotic proteasomes.

It localises to the cytoplasm. It carries out the reaction Hydrolysis of proteins to small peptides in the presence of ATP and magnesium. alpha-casein is the usual test substrate. In the absence of ATP, only oligopeptides shorter than five residues are hydrolyzed (such as succinyl-Leu-Tyr-|-NHMec, and Leu-Tyr-Leu-|-Tyr-Trp, in which cleavage of the -Tyr-|-Leu- and -Tyr-|-Trp bonds also occurs).. Cleaves peptides in various proteins in a process that requires ATP hydrolysis. Has a chymotrypsin-like activity. Plays a major role in the degradation of misfolded proteins. This Clostridium botulinum (strain Eklund 17B / Type B) protein is ATP-dependent Clp protease proteolytic subunit.